We begin with the raw amino-acid sequence, 371 residues long: Cytochrome b (371 aa).

A run of 4 helical transmembrane segments spans residues 25 to 45, 69 to 90, 105 to 125, and 170 to 190; these read FGSM…FLAI, WMMQ…YIHI, WMSG…GYVL, and FFAL…LHII. The heme b site is built by His75 and His89. 2 residues coordinate heme b: His174 and His188. His193 lines the a ubiquinone pocket. Transmembrane regions (helical) follow at residues 218 to 238, 280 to 300, 312 to 332, and 339 to 358; these read HKDL…VSFL, LGGA…PFTH, LSQL…WAAT, and FIII…LSTP.

It belongs to the cytochrome b family. As to quaternary structure, the cytochrome bc1 complex contains 3 respiratory subunits (MT-CYB, CYC1 and UQCRFS1), 2 core proteins (UQCRC1 and UQCRC2) and probably 6 low-molecular weight proteins. It depends on heme b as a cofactor.

It is found in the mitochondrion inner membrane. In terms of biological role, component of the ubiquinol-cytochrome c reductase complex (complex III or cytochrome b-c1 complex) that is part of the mitochondrial respiratory chain. The b-c1 complex mediates electron transfer from ubiquinol to cytochrome c. Contributes to the generation of a proton gradient across the mitochondrial membrane that is then used for ATP synthesis. The chain is Cytochrome b (MT-CYB) from Antaresia maculosa (Eastern small blotched python).